A 608-amino-acid polypeptide reads, in one-letter code: Glutamine--fructose-6-phosphate aminotransferase [isomerizing] (608 aa).

Cys2 serves as the catalytic Nucleophile; for GATase activity. One can recognise a Glutamine amidotransferase type-2 domain in the interval 2–217 (CGIVGIVGNQ…DGDWAVIGKT (216 aa)). 2 consecutive SIS domains span residues 281-422 (ISDA…ARGT) and 456-598 (LSRE…VDQP). The For Fru-6P isomerization activity role is filled by Lys603.

It is found in the cytoplasm. The enzyme catalyses D-fructose 6-phosphate + L-glutamine = D-glucosamine 6-phosphate + L-glutamate. In terms of biological role, involved in the production of the root hair deformation (HAD) factor specifically on medicago. This Rhizobium meliloti (strain 1021) (Ensifer meliloti) protein is Glutamine--fructose-6-phosphate aminotransferase [isomerizing] (nodM).